Here is a 66-residue protein sequence, read N- to C-terminus: Large ribosomal subunit protein bL35 (66 aa).

It belongs to the bacterial ribosomal protein bL35 family.

In Bradyrhizobium diazoefficiens (strain JCM 10833 / BCRC 13528 / IAM 13628 / NBRC 14792 / USDA 110), this protein is Large ribosomal subunit protein bL35.